The chain runs to 119 residues: Large ribosomal subunit protein uL22c (119 aa).

The protein belongs to the universal ribosomal protein uL22 family. In terms of assembly, part of the 50S ribosomal subunit.

It localises to the plastid. The protein localises to the chloroplast. This protein binds specifically to 23S rRNA. In terms of biological role, the globular domain of the protein is located near the polypeptide exit tunnel on the outside of the subunit, while an extended beta-hairpin is found that lines the wall of the exit tunnel in the center of the 70S ribosome. This Mesostigma viride (Green alga) protein is Large ribosomal subunit protein uL22c (rpl22).